The sequence spans 271 residues: Dirigent protein 17 (271 aa).

The segment covering 1-12 has biased composition (polar residues); sequence MEDTGSIKQEAQ. The interval 1–22 is disordered; it reads MEDTGSIKQEAQSHPPGIFEIP. Residue asparagine 255 is glycosylated (N-linked (GlcNAc...) asparagine).

The protein belongs to the plant dirigent protein family. In terms of assembly, homodimer.

It localises to the secreted. The protein resides in the extracellular space. Its subcellular location is the apoplast. Its function is as follows. Dirigent proteins impart stereoselectivity on the phenoxy radical-coupling reaction, yielding optically active lignans from two molecules of coniferyl alcohol in the biosynthesis of lignans, flavonolignans, and alkaloids and thus plays a central role in plant secondary metabolism. In Arabidopsis thaliana (Mouse-ear cress), this protein is Dirigent protein 17 (DIR17).